An 85-amino-acid polypeptide reads, in one-letter code: Arminin 2b (85 aa).

A signal peptide spans 1–18 (MKTVFAILFLAFIALTYA). Positions 19 to 57 (RSYEDVKEEIKNEIEKEILEDLEEESDELNDKSKEINDA) are excised as a propeptide. The residue at position 82 (alanine 82) is an Alanine amide.

It belongs to the arminin family. As to expression, expressed in entodermal epithelium along the body column.

The protein localises to the secreted. It is found in the target cell membrane. In terms of biological role, antimicrobial peptide with a broad-spectrum antimicrobial activity. Keeps its antibacterial activity under a wide range of salt concentrations that mimic physiological conditions of human blood, which is surprising, since Hydra is an obligate freshwater animal with nearly no salt tolerance. Does not affect red blood cells. In Hydra vulgaris (Hydra), this protein is Arminin 2b.